The sequence spans 184 residues: Two-component response regulator ARR5 (184 aa).

One can recognise a Response regulatory domain in the interval 26–154 (HVLAVDDSMV…DVKRLRDSLM (129 aa)). Aspartate 87 bears the 4-aspartylphosphate mark.

It belongs to the ARR family. Type-A subfamily. Post-translationally, two-component system major event consists of a His-to-Asp phosphorelay between a sensor histidine kinase (HK) and a response regulator (RR). In plants, the His-to-Asp phosphorelay involves an additional intermediate named Histidine-containing phosphotransfer protein (HPt). This multistep phosphorelay consists of a His-Asp-His-Asp sequential transfer of a phosphate group between first a His and an Asp of the HK protein, followed by the transfer to a conserved His of the HPt protein and finally the transfer to an Asp in the receiver domain of the RR protein. As to expression, predominantly expressed in roots and shoot apical meristems.

It is found in the nucleus. Functions as a response regulator involved in His-to-Asp phosphorelay signal transduction system. Phosphorylation of the Asp residue in the receiver domain activates the ability of the protein to promote the transcription of target genes. Type-A response regulators seem to act as negative regulators of the cytokinin signaling. The polypeptide is Two-component response regulator ARR5 (ARR5) (Arabidopsis thaliana (Mouse-ear cress)).